The sequence spans 348 residues: tRNA N6-adenosine threonylcarbamoyltransferase (348 aa).

Residues His-109 and His-113 each coordinate Fe cation. Substrate is bound by residues 136–140, Asp-169, Gly-182, Asp-186, and Asn-284; that span reads TVSGG. Residue Asp-312 participates in Fe cation binding.

Belongs to the KAE1 / TsaD family. Fe(2+) serves as cofactor.

It localises to the cytoplasm. The enzyme catalyses L-threonylcarbamoyladenylate + adenosine(37) in tRNA = N(6)-L-threonylcarbamoyladenosine(37) in tRNA + AMP + H(+). Required for the formation of a threonylcarbamoyl group on adenosine at position 37 (t(6)A37) in tRNAs that read codons beginning with adenine. Is involved in the transfer of the threonylcarbamoyl moiety of threonylcarbamoyl-AMP (TC-AMP) to the N6 group of A37, together with TsaE and TsaB. TsaD likely plays a direct catalytic role in this reaction. This is tRNA N6-adenosine threonylcarbamoyltransferase from Chlorobium luteolum (strain DSM 273 / BCRC 81028 / 2530) (Pelodictyon luteolum).